Reading from the N-terminus, the 414-residue chain is 3-aminobutyryl-CoA aminotransferase (414 aa).

K261 is subject to N6-(pyridoxal phosphate)lysine.

Belongs to the class-III pyridoxal-phosphate-dependent aminotransferase family. As to quaternary structure, homodimer. Pyridoxal 5'-phosphate is required as a cofactor.

The catalysed reaction is (3S)-3-aminobutanoyl-CoA + 2-oxoglutarate = acetoacetyl-CoA + L-glutamate. It functions in the pathway amino-acid degradation; L-lysine degradation via acetate pathway. 3-aminobutyryl-CoA aminotransferase that acts specifically on coenzyme A (CoA) esters and catalyzes the conversion of 3-aminobutyryl-CoA into acetoacetyl-CoA in an alternative pathway of lysine fermentation. The sequence is that of 3-aminobutyryl-CoA aminotransferase (kat) from Cloacimonas acidaminovorans (strain Evry).